The following is a 348-amino-acid chain: Fructose-1,6-bisphosphatase class 1 (348 aa).

Mg(2+) is bound by residues E92, D111, L113, and D114. Residues 114-117 (DGSS) and N204 each bind substrate. E276 contacts Mg(2+).

The protein belongs to the FBPase class 1 family. As to quaternary structure, homotetramer. Mg(2+) serves as cofactor.

Its subcellular location is the cytoplasm. The enzyme catalyses beta-D-fructose 1,6-bisphosphate + H2O = beta-D-fructose 6-phosphate + phosphate. It participates in carbohydrate biosynthesis; gluconeogenesis. This Methylorubrum populi (strain ATCC BAA-705 / NCIMB 13946 / BJ001) (Methylobacterium populi) protein is Fructose-1,6-bisphosphatase class 1.